A 421-amino-acid chain; its full sequence is MAAALRRGYKVLRSVSHFECRAQHTKPSLKQEPGLGFSFELTEQQKEFQTIARKFAREEIIPVAPDYDKSGEYPFPLIKRAWELGLINTHIPESCGGLGLGTFDACLITEELAYGCTGVQTAIEANSLGQMPVIIAGNDQQKKKYLGRMTEQPMMCAYCVTEPSAGSDVAGIKTKAEKKGDEYVINGQKMWITNGGKANWYFVLTRSNPDPKVPASKAFTGFIVEADTPGIHIGKKELNMGQRCSDTRGITFEDVRVPKENVLIGEGAGFKIAMGAFDRTRPTVAAGAVGLAQRALDEATKYALDRKTFGKLLVEHQGVSFLLAEMAMKVELARLSYQRAAWEVDSGRRNTYFASIAKAFAGDIANQLATDAVQIFGGYGFNTEYPVEKLMRDAKIYQIYEGTAQIQRLIIAREHIEKYKN.

Residues Met1–Thr25 constitute a mitochondrion transit peptide. At Lys69 the chain carries N6-acetyllysine; alternate. An N6-succinyllysine; alternate modification is found at Lys69. Residue Lys79 is modified to N6-acetyllysine. Tyr158–Ser167 contributes to the FAD binding site. Ser167 serves as a coordination point for octanoyl-CoA. Residue Lys179 is modified to N6-succinyllysine. Trp191–Thr193 provides a ligand contact to FAD. At Lys212 the chain carries N6-acetyllysine; alternate. Lys212 carries the N6-succinyllysine; alternate modification. Position 216 (Ser216) interacts with octanoyl-CoA. Residues Lys217, Lys259, and Lys271 each carry the N6-acetyllysine; alternate modification. N6-succinyllysine; alternate is present on residues Lys217, Lys259, and Lys271. Octanoyl-CoA-binding residues include Asp278 and Arg281. The residue at position 301 (Lys301) is an N6-acetyllysine. FAD-binding positions include Arg306–Thr308 and His316–Gln317. Residues Arg349 and Thr351 each contribute to the octanoyl-CoA site. A Phosphothreonine modification is found at Thr351. FAD is bound at residue Gln374–Gly378. Position 401 (Glu401) interacts with octanoyl-CoA. Glu401 acts as the Proton acceptor in catalysis. Gly402–Gln405 is a binding site for FAD.

The protein belongs to the acyl-CoA dehydrogenase family. As to quaternary structure, homotetramer. Interacts with the heterodimeric electron transfer flavoprotein ETF. FAD serves as cofactor. Post-translationally, acetylated. Could occur at proximity of the cofactor-binding sites and reduce the catalytic activity. Could be deacetylated by SIRT3.

It localises to the mitochondrion matrix. The catalysed reaction is a medium-chain 2,3-saturated fatty acyl-CoA + oxidized [electron-transfer flavoprotein] + H(+) = a medium-chain (2E)-enoyl-CoA + reduced [electron-transfer flavoprotein]. The enzyme catalyses pentanoyl-CoA + oxidized [electron-transfer flavoprotein] + H(+) = (2E)-pentenoyl-CoA + reduced [electron-transfer flavoprotein]. It catalyses the reaction hexanoyl-CoA + oxidized [electron-transfer flavoprotein] + H(+) = (2E)-hexenoyl-CoA + reduced [electron-transfer flavoprotein]. It carries out the reaction octanoyl-CoA + oxidized [electron-transfer flavoprotein] + H(+) = (2E)-octenoyl-CoA + reduced [electron-transfer flavoprotein]. The catalysed reaction is decanoyl-CoA + oxidized [electron-transfer flavoprotein] + H(+) = (2E)-decenoyl-CoA + reduced [electron-transfer flavoprotein]. The enzyme catalyses dodecanoyl-CoA + oxidized [electron-transfer flavoprotein] + H(+) = (2E)-dodecenoyl-CoA + reduced [electron-transfer flavoprotein]. It catalyses the reaction tetradecanoyl-CoA + oxidized [electron-transfer flavoprotein] + H(+) = (2E)-tetradecenoyl-CoA + reduced [electron-transfer flavoprotein]. It carries out the reaction oxidized [electron-transfer flavoprotein] + hexadecanoyl-CoA + H(+) = (2E)-hexadecenoyl-CoA + reduced [electron-transfer flavoprotein]. Its pathway is lipid metabolism; mitochondrial fatty acid beta-oxidation. Functionally, medium-chain specific acyl-CoA dehydrogenase is one of the acyl-CoA dehydrogenases that catalyze the first step of mitochondrial fatty acid beta-oxidation, an aerobic process breaking down fatty acids into acetyl-CoA and allowing the production of energy from fats. The first step of fatty acid beta-oxidation consists in the removal of one hydrogen from C-2 and C-3 of the straight-chain fatty acyl-CoA thioester, resulting in the formation of trans-2-enoyl-CoA. Electron transfer flavoprotein (ETF) is the electron acceptor that transfers electrons to the main mitochondrial respiratory chain via ETF-ubiquinone oxidoreductase (ETF dehydrogenase). Among the different mitochondrial acyl-CoA dehydrogenases, medium-chain specific acyl-CoA dehydrogenase acts specifically on acyl-CoAs with saturated 6 to 12 carbons long primary chains. This is Medium-chain specific acyl-CoA dehydrogenase, mitochondrial from Rattus norvegicus (Rat).